A 502-amino-acid chain; its full sequence is Cytochrome P450 2J2 (502 aa).

Heme is bound at residue cysteine 448.

It belongs to the cytochrome P450 family. Requires heme as cofactor. In terms of tissue distribution, highly expressed in heart, present at lower levels in liver, kidney and skeletal muscle (at protein level).

The protein localises to the endoplasmic reticulum membrane. It is found in the microsome membrane. The enzyme catalyses (5Z,8Z,11Z,14Z)-eicosatetraenoate + reduced [NADPH--hemoprotein reductase] + O2 = 5,6-epoxy-(8Z,11Z,14Z)-eicosatrienoate + oxidized [NADPH--hemoprotein reductase] + H2O + H(+). It catalyses the reaction (5Z,8Z,11Z,14Z)-eicosatetraenoate + reduced [NADPH--hemoprotein reductase] + O2 = (8R,9S)-epoxy-(5Z,11Z,14Z)-eicosatrienoate + oxidized [NADPH--hemoprotein reductase] + H2O + H(+). It carries out the reaction (5Z,8Z,11Z,14Z)-eicosatetraenoate + reduced [NADPH--hemoprotein reductase] + O2 = (8S,9R)-epoxy-(5Z,11Z,14Z)-eicosatrienoate + oxidized [NADPH--hemoprotein reductase] + H2O + H(+). The catalysed reaction is (5Z,8Z,11Z,14Z)-eicosatetraenoate + reduced [NADPH--hemoprotein reductase] + O2 = (11R,12S)-epoxy-(5Z,8Z,14Z)-eicosatrienoate + oxidized [NADPH--hemoprotein reductase] + H2O + H(+). The enzyme catalyses (5Z,8Z,11Z,14Z)-eicosatetraenoate + reduced [NADPH--hemoprotein reductase] + O2 = (11S,12R)-epoxy-(5Z,8Z,14Z)-eicosatrienoate + oxidized [NADPH--hemoprotein reductase] + H2O + H(+). It catalyses the reaction (5Z,8Z,11Z,14Z)-eicosatetraenoate + reduced [NADPH--hemoprotein reductase] + O2 = (14R,15S)-epoxy-(5Z,8Z,11Z)-eicosatrienoate + oxidized [NADPH--hemoprotein reductase] + H2O + H(+). It carries out the reaction (5Z,8Z,11Z,14Z)-eicosatetraenoate + reduced [NADPH--hemoprotein reductase] + O2 = (14S,15R)-epoxy-(5Z,8Z,11Z)-eicosatrienoate + oxidized [NADPH--hemoprotein reductase] + H2O + H(+). The catalysed reaction is (15S)-hydroperoxy-(5Z,8Z,11Z,13E)-eicosatetraenoate = (13S)-hydroxy-(14S,15S)-epoxy-(5Z,8Z,11Z)-eicosatrienoate. The enzyme catalyses (15S)-hydroperoxy-(5Z,8Z,11Z,13E)-eicosatetraenoate = (13R)-hydroxy-(14S,15S)-epoxy-(5Z,8Z,11Z)-eicosatrienoate. It catalyses the reaction (5Z,8Z,11Z,14Z,17Z)-eicosapentaenoate + reduced [NADPH--hemoprotein reductase] + O2 = (17R,18S)-epoxy-(5Z,8Z,11Z,14Z)-eicosatetraenoate + oxidized [NADPH--hemoprotein reductase] + H2O + H(+). It carries out the reaction (5Z,8Z,11Z,14Z,17Z)-eicosapentaenoate + reduced [NADPH--hemoprotein reductase] + O2 = (17S,18R)-epoxy-(5Z,8Z,11Z,14Z)-eicosatetraenoate + oxidized [NADPH--hemoprotein reductase] + H2O + H(+). The catalysed reaction is (4Z,7Z,10Z,13Z,16Z,19Z)-docosahexaenoate + reduced [NADPH--hemoprotein reductase] + O2 = (19R,20S)-epoxy-(4Z,7Z,10Z,13Z,16Z)-docosapentaenoate + oxidized [NADPH--hemoprotein reductase] + H2O + H(+). The enzyme catalyses (4Z,7Z,10Z,13Z,16Z,19Z)-docosahexaenoate + reduced [NADPH--hemoprotein reductase] + O2 = (19S,20R)-epoxy-(4Z,7Z,10Z,13Z,16Z)-docosapentaenoate + oxidized [NADPH--hemoprotein reductase] + H2O + H(+). It catalyses the reaction albendazole + reduced [NADPH--hemoprotein reductase] + O2 = hydroxyalbendazole + oxidized [NADPH--hemoprotein reductase] + H2O + H(+). It carries out the reaction albendazole + reduced [NADPH--hemoprotein reductase] + O2 = albendazole S-oxide + oxidized [NADPH--hemoprotein reductase] + H2O + H(+). The catalysed reaction is fenbendazole + reduced [NADPH--hemoprotein reductase] + O2 = fenbendazole S-oxide + oxidized [NADPH--hemoprotein reductase] + H2O + H(+). It functions in the pathway lipid metabolism; arachidonate metabolism. Its function is as follows. A cytochrome P450 monooxygenase involved in the metabolism of polyunsaturated fatty acids (PUFA) in the cardiovascular system. Mechanistically, uses molecular oxygen inserting one oxygen atom into a substrate, and reducing the second into a water molecule, with two electrons provided by NADPH via cytochrome P450 reductase (NADPH--hemoprotein reductase). Catalyzes the epoxidation of double bonds of PUFA. Converts arachidonic acid to four regioisomeric epoxyeicosatrienoic acids (EpETrE), likely playing a major role in the epoxidation of endogenous cardiac arachidonic acid pools. In endothelial cells, participates in eicosanoids metabolism by converting hydroperoxide species into hydroxy epoxy metabolites. In combination with 15-lipoxygenase metabolizes arachidonic acid and converts hydroperoxyicosatetraenoates (HpETEs) into hydroxy epoxy eicosatrienoates (HEETs), which are precursors of vasodilatory trihydroxyicosatrienoic acids (THETAs). This hydroperoxide isomerase activity is NADPH- and O2-independent. Catalyzes the monooxygenation of a various xenobiotics, such as danazol, amiodarone, terfenadine, astemizole, thioridazine, tamoxifen, cyclosporin A and nabumetone. Catalyzes hydroxylation of the anthelmintics albendazole and fenbendazole. Catalyzes the sulfoxidation of fenbedazole. The chain is Cytochrome P450 2J2 from Homo sapiens (Human).